The sequence spans 319 residues: Probable arabinan endo-1,5-alpha-L-arabinosidase A (319 aa).

The signal sequence occupies residues 1 to 19 (MYLQSSLALVLLRAAVVHG). Asp-34 functions as the Proton acceptor in the catalytic mechanism. Asn-53 carries an N-linked (GlcNAc...) asparagine glycan. Glu-198 serves as the catalytic Proton donor.

This sequence belongs to the glycosyl hydrolase 43 family.

The protein localises to the secreted. It catalyses the reaction Endohydrolysis of (1-&gt;5)-alpha-arabinofuranosidic linkages in (1-&gt;5)-arabinans.. The protein operates within glycan metabolism; L-arabinan degradation. Its function is as follows. Endo-1,5-alpha-L-arabinanase involved in degradation of pectin. Its preferred substrate is linear 1,5-alpha-L-arabinan. The sequence is that of Probable arabinan endo-1,5-alpha-L-arabinosidase A (abnA) from Aspergillus flavus (strain ATCC 200026 / FGSC A1120 / IAM 13836 / NRRL 3357 / JCM 12722 / SRRC 167).